A 79-amino-acid chain; its full sequence is Serine protease inhibitor Kazal-type 1 (79 aa).

The signal sequence occupies residues 1 to 18 (MKVAIIFLLSALALLSLA). Positions 26-79 (NGKTPNCPKQIMGCPRIYDPVCGTNGITYPSECSLCFENRKFGTSIHIQRRGTC) constitute a Kazal-like domain. Cystine bridges form between cysteine 32/cysteine 61, cysteine 39/cysteine 58, and cysteine 47/cysteine 79.

The protein localises to the secreted. In terms of biological role, serine protease inhibitor which exhibits anti-trypsin activity. In the pancreas, protects against trypsin-catalyzed premature activation of zymogens. In the male reproductive tract, binds to sperm heads where it modulates sperm capacitance by inhibiting calcium uptake and nitrogen oxide (NO) production. The polypeptide is Serine protease inhibitor Kazal-type 1 (Rattus norvegicus (Rat)).